Reading from the N-terminus, the 203-residue chain is FMN-dependent NADH:quinone oxidoreductase (203 aa).

Residues Ser9, 15–17, and 139–142 contribute to the FMN site; these read SVS and TRGG.

It belongs to the azoreductase type 1 family. As to quaternary structure, homodimer. FMN serves as cofactor.

The enzyme catalyses 2 a quinone + NADH + H(+) = 2 a 1,4-benzosemiquinone + NAD(+). It carries out the reaction N,N-dimethyl-1,4-phenylenediamine + anthranilate + 2 NAD(+) = 2-(4-dimethylaminophenyl)diazenylbenzoate + 2 NADH + 2 H(+). In terms of biological role, quinone reductase that provides resistance to thiol-specific stress caused by electrophilic quinones. Its function is as follows. Also exhibits azoreductase activity. Catalyzes the reductive cleavage of the azo bond in aromatic azo compounds to the corresponding amines. The protein is FMN-dependent NADH:quinone oxidoreductase of Albidiferax ferrireducens (strain ATCC BAA-621 / DSM 15236 / T118) (Rhodoferax ferrireducens).